Reading from the N-terminus, the 128-residue chain is Phosphoribosyl-AMP cyclohydrolase (128 aa).

Aspartate 89 is a Mg(2+) binding site. Residue cysteine 90 participates in Zn(2+) binding. Residues aspartate 91 and aspartate 93 each contribute to the Mg(2+) site. Cysteine 106 and cysteine 113 together coordinate Zn(2+).

Belongs to the PRA-CH family. In terms of assembly, homodimer. It depends on Mg(2+) as a cofactor. Zn(2+) is required as a cofactor.

It is found in the cytoplasm. The enzyme catalyses 1-(5-phospho-beta-D-ribosyl)-5'-AMP + H2O = 1-(5-phospho-beta-D-ribosyl)-5-[(5-phospho-beta-D-ribosylamino)methylideneamino]imidazole-4-carboxamide. It participates in amino-acid biosynthesis; L-histidine biosynthesis; L-histidine from 5-phospho-alpha-D-ribose 1-diphosphate: step 3/9. Its function is as follows. Catalyzes the hydrolysis of the adenine ring of phosphoribosyl-AMP. The sequence is that of Phosphoribosyl-AMP cyclohydrolase from Pyrobaculum calidifontis (strain DSM 21063 / JCM 11548 / VA1).